We begin with the raw amino-acid sequence, 151 residues long: Macrodomain Ter protein (151 aa).

This sequence belongs to the MatP family. In terms of assembly, homodimer.

It is found in the cytoplasm. In terms of biological role, required for spatial organization of the terminus region of the chromosome (Ter macrodomain) during the cell cycle. Prevents early segregation of duplicated Ter macrodomains during cell division. Binds specifically to matS, which is a 13 bp signature motif repeated within the Ter macrodomain. The sequence is that of Macrodomain Ter protein from Yersinia enterocolitica serotype O:8 / biotype 1B (strain NCTC 13174 / 8081).